Here is a 597-residue protein sequence, read N- to C-terminus: Hydrogenase-1 large chain (597 aa).

Ni(2+) is bound by residues Cys-76, Cys-79, Cys-576, and Cys-579.

This sequence belongs to the [NiFe]/[NiFeSe] hydrogenase large subunit family. Heterodimer of a large and a small subunit. Ni(2+) serves as cofactor.

It is found in the cell membrane. The enzyme catalyses H2 + A = AH2. Its function is as follows. This is one of three E.coli hydrogenases synthesized in response to different physiological conditions. HYD1 is believed to have a role in hydrogen cycling during fermentative growth. This chain is Hydrogenase-1 large chain (hyaB), found in Escherichia coli (strain K12).